The sequence spans 932 residues: Calpain-like protease palB/cpr-8 (932 aa).

In terms of domain architecture, Calpain catalytic spans 96-419 (KLHGNIFPPW…FDSLYVNWSP (324 aa)). Residues Cys-178, His-346, and Asn-366 contribute to the active site. The disordered stretch occupies residues 890 to 932 (QGHVTEGSDDDGGGGGGGGGGVHVEISSDGVVSIGEWEVADED). Gly residues predominate over residues 902–911 (GGGGGGGGGV).

The protein belongs to the peptidase C2 family. PalB/RIM13 subfamily.

Functionally, required for the proteolytic cleavage of the transcription factor pacc-1 in response to alkaline ambient pH. This Neurospora crassa (strain ATCC 24698 / 74-OR23-1A / CBS 708.71 / DSM 1257 / FGSC 987) protein is Calpain-like protease palB/cpr-8 (cpr-8).